The primary structure comprises 247 residues: Probable transcriptional regulatory protein Hhal_2210 (247 aa).

Belongs to the TACO1 family.

It localises to the cytoplasm. This chain is Probable transcriptional regulatory protein Hhal_2210, found in Halorhodospira halophila (strain DSM 244 / SL1) (Ectothiorhodospira halophila (strain DSM 244 / SL1)).